The following is a 190-amino-acid chain: Peptidyl-tRNA hydrolase (190 aa).

Tyrosine 14 serves as a coordination point for tRNA. Histidine 19 serves as the catalytic Proton acceptor. Residues tyrosine 63, asparagine 65, and asparagine 112 each contribute to the tRNA site.

This sequence belongs to the PTH family. As to quaternary structure, monomer.

The protein resides in the cytoplasm. The enzyme catalyses an N-acyl-L-alpha-aminoacyl-tRNA + H2O = an N-acyl-L-amino acid + a tRNA + H(+). In terms of biological role, hydrolyzes ribosome-free peptidyl-tRNAs (with 1 or more amino acids incorporated), which drop off the ribosome during protein synthesis, or as a result of ribosome stalling. Functionally, catalyzes the release of premature peptidyl moieties from peptidyl-tRNA molecules trapped in stalled 50S ribosomal subunits, and thus maintains levels of free tRNAs and 50S ribosomes. This is Peptidyl-tRNA hydrolase from Kosmotoga olearia (strain ATCC BAA-1733 / DSM 21960 / TBF 19.5.1).